The primary structure comprises 425 residues: Succinyl-diaminopimelate desuccinylase (425 aa).

His96 is a Zn(2+) binding site. Residue Asp98 is part of the active site. Position 129 (Asp129) interacts with Zn(2+). Glu163 (proton acceptor) is an active-site residue. The Zn(2+) site is built by Glu164, Glu192, and His378.

It belongs to the peptidase M20A family. DapE subfamily. Homodimer. Zn(2+) serves as cofactor. It depends on Co(2+) as a cofactor.

The enzyme catalyses N-succinyl-(2S,6S)-2,6-diaminopimelate + H2O = (2S,6S)-2,6-diaminopimelate + succinate. The protein operates within amino-acid biosynthesis; L-lysine biosynthesis via DAP pathway; LL-2,6-diaminopimelate from (S)-tetrahydrodipicolinate (succinylase route): step 3/3. Catalyzes the hydrolysis of N-succinyl-L,L-diaminopimelic acid (SDAP), forming succinate and LL-2,6-diaminopimelate (DAP), an intermediate involved in the bacterial biosynthesis of lysine and meso-diaminopimelic acid, an essential component of bacterial cell walls. This Polaromonas sp. (strain JS666 / ATCC BAA-500) protein is Succinyl-diaminopimelate desuccinylase.